Here is a 1109-residue protein sequence, read N- to C-terminus: Protein phosphatase 1 regulatory subunit 3A (1109 aa).

Residues Ser-40 and Ser-44 each carry the phosphoserine; by GSK3 modification. Ser-48 is subject to Phosphoserine; by PKA and ISPK. Ser-51 is modified (phosphoserine). Residue Thr-58 is modified to Phosphothreonine. The short motif at 64–67 (RRVS) is the PP1-binding motif element. Position 67 is a phosphoserine; by PKA (Ser-67). The 109-residue stretch at 124 to 232 (QLQVQKAMLE…NNNGTNYTLV (109 aa)) folds into the CBM21 domain. Residues 236–251 (KEPEPEPGKPLEEAPS) are compositionally biased toward basic and acidic residues. 4 disordered regions span residues 236–278 (KEPE…NFEN), 340–424 (GKNT…SDGS), 436–455 (DDNA…CSFP), and 493–517 (YFKK…KEKR). 3 stretches are compositionally biased toward polar residues: residues 340 to 352 (GKNT…SNIP), 360 to 384 (KNQS…SAES), and 396 to 406 (YSSGNESSHQP). Ser-843 is modified (phosphoserine). 2 disordered regions span residues 945 to 985 (SATE…RKEK) and 1011 to 1048 (SREN…ETQD). Positions 951–963 (YNCSPTRETQGQP) are enriched in polar residues. Basic and acidic residues-rich tracts occupy residues 966–985 (KPEE…RKEK) and 1011–1034 (SREN…KEFE). A compositionally biased stretch (polar residues) spans 1035–1048 (SSASSSLPVQETQD). The chain crosses the membrane as a helical span at residues 1066–1086 (FLLFLMFLVTVYHYDLMIGLA).

Interacts with PPP1CC catalytic subunit of PP1, and associates with glycogen. In terms of processing, phosphorylation at Ser-48 by ISPK stimulates the dephosphorylation of glycogen synthase and phosphorylase kinase. In terms of tissue distribution, skeletal muscle, diaphragm and cardiac muscle.

Its subcellular location is the membrane. Its function is as follows. Seems to act as a glycogen-targeting subunit for PP1. PP1 is essential for cell division, and participates in the regulation of glycogen metabolism, muscle contractility and protein synthesis. Plays an important role in glycogen synthesis but is not essential for insulin activation of glycogen synthase. The protein is Protein phosphatase 1 regulatory subunit 3A (PPP1R3A) of Oryctolagus cuniculus (Rabbit).